We begin with the raw amino-acid sequence, 258 residues long: Phycoerythrobilin:ferredoxin oxidoreductase (258 aa).

The protein belongs to the HY2 family.

It carries out the reaction (3Z)-phycoerythrobilin + oxidized 2[4Fe-4S]-[ferredoxin] = 15,16-dihydrobiliverdin + reduced 2[4Fe-4S]-[ferredoxin] + 2 H(+). Its function is as follows. Catalyzes the two-electron reduction of the C2 and C3(1) diene system of 15,16-dihydrobiliverdin. The protein is Phycoerythrobilin:ferredoxin oxidoreductase of Prochlorococcus marinus (strain NATL1A).